A 1025-amino-acid chain; its full sequence is Multidrug resistance protein MdtC (1025 aa).

12 consecutive transmembrane segments (helical) span residues F3–L23, E333–L353, I360–C380, L387–L407, V431–L451, F463–P483, L528–P548, V853–S873, V875–L895, L897–V917, P953–G973, and I984–V1004.

This sequence belongs to the resistance-nodulation-cell division (RND) (TC 2.A.6) family. MdtC subfamily. Part of a tripartite efflux system composed of MdtA, MdtB and MdtC. MdtC forms a heteromultimer with MdtB.

Its subcellular location is the cell inner membrane. The MdtABC tripartite complex confers resistance against novobiocin and deoxycholate. The polypeptide is Multidrug resistance protein MdtC (Escherichia coli (strain K12 / MC4100 / BW2952)).